The primary structure comprises 315 residues: Homoserine kinase (315 aa).

97-107 (PPARGLGSSAT) is a binding site for ATP.

The protein belongs to the GHMP kinase family. Homoserine kinase subfamily.

The protein localises to the cytoplasm. The enzyme catalyses L-homoserine + ATP = O-phospho-L-homoserine + ADP + H(+). It participates in amino-acid biosynthesis; L-threonine biosynthesis; L-threonine from L-aspartate: step 4/5. Functionally, catalyzes the ATP-dependent phosphorylation of L-homoserine to L-homoserine phosphate. The polypeptide is Homoserine kinase (Prochlorococcus marinus (strain MIT 9312)).